Here is a 523-residue protein sequence, read N- to C-terminus: Dynein regulatory complex subunit 3 (523 aa).

LRR repeat units lie at residues 44-65 (DVLSLQLDFQNILRIDNLWQFE), 66-87 (NLKKLQLNNNIIERIEGLTNLI), 88-109 (HLVWLDLSFNNIEAIEGLDTLV), 110-131 (NLEDLSLSNNRISKVDSLDALV), and 132-153 (KLQVLSLGNNQISNMMNIIYLR). One can recognise an LRRCT domain in the interval 166 to 204 (NPVSEAEEYKMFIYAYLSDLVYLDFRRVDEQMREMAKMK). 2 coiled-coil regions span residues 204-242 (KHQYSIDELKHREAQLQMKLEEEQAKQEKLEEHKMAFVE) and 333-393 (LNLN…LVGL).

It belongs to the DRC3 family. In terms of assembly, component of the nexin-dynein regulatory complex (N-DRC). Interacts with DRC1. Interacts with TCTE1/DRC5. Interacts with DRC7.

It localises to the cytoplasm. Its subcellular location is the cytoskeleton. The protein resides in the cilium axoneme. The protein localises to the cell projection. It is found in the cilium. It localises to the flagellum axoneme. Its subcellular location is the flagellum. Functionally, component of the nexin-dynein regulatory complex (N-DRC) a key regulator of ciliary/flagellar motility which maintains the alignment and integrity of the distal axoneme and regulates microtubule sliding in motile axonemes. This Mus musculus (Mouse) protein is Dynein regulatory complex subunit 3 (Drc3).